The chain runs to 155 residues: uncharacterized protein (155 aa).

This is an uncharacterized protein from Methanocaldococcus jannaschii (strain ATCC 43067 / DSM 2661 / JAL-1 / JCM 10045 / NBRC 100440) (Methanococcus jannaschii).